Consider the following 196-residue polypeptide: GTP cyclohydrolase-2 (196 aa).

49–53 (RVHSE) is a binding site for GTP. The Zn(2+) site is built by cysteine 54, cysteine 65, and cysteine 67. GTP contacts are provided by residues glutamine 70, 92-94 (EGR), and threonine 114. Catalysis depends on aspartate 126, which acts as the Proton acceptor. Arginine 128 functions as the Nucleophile in the catalytic mechanism. Residues threonine 149 and lysine 154 each contribute to the GTP site.

Belongs to the GTP cyclohydrolase II family. As to quaternary structure, homodimer. The cofactor is Zn(2+).

It catalyses the reaction GTP + 4 H2O = 2,5-diamino-6-hydroxy-4-(5-phosphoribosylamino)-pyrimidine + formate + 2 phosphate + 3 H(+). It participates in cofactor biosynthesis; riboflavin biosynthesis; 5-amino-6-(D-ribitylamino)uracil from GTP: step 1/4. Its function is as follows. Catalyzes the conversion of GTP to 2,5-diamino-6-ribosylamino-4(3H)-pyrimidinone 5'-phosphate (DARP), formate and pyrophosphate. In Enterobacter sp. (strain 638), this protein is GTP cyclohydrolase-2.